A 412-amino-acid chain; its full sequence is Methylmalonic aciduria type A homolog, mitochondrial (412 aa).

A mitochondrion-targeting transit peptide spans 1–15 (MVVRALVRAHPLSRI). GTP-binding positions include 132–140 (GSPGVGKSS), Asp-275, and 311–313 (SIM).

Belongs to the SIMIBI class G3E GTPase family. ArgK/MeaB subfamily.

It localises to the mitochondrion. In terms of biological role, may have GTPase activity. May also bind and hydrolyze ATP. May function as chaperone. Likely to have a role in propionyl-CoA metabolism and adenosylcobalamin synthesis. The chain is Methylmalonic aciduria type A homolog, mitochondrial from Caenorhabditis briggsae.